Reading from the N-terminus, the 311-residue chain is Protoheme IX farnesyltransferase (311 aa).

Transmembrane regions (helical) follow at residues 38–58, 62–82, 113–133, 134–154, 162–182, 188–208, 230–250, 251–271, and 286–306; these read IKVV…APDM, YFVQ…AAVI, LIFS…AANW, LTAQ…TMFL, IVIG…SETG, PWIL…ALAI, FTKT…FLPF, LIHM…IIFI, and ALNL…ALFA.

Belongs to the UbiA prenyltransferase family. Protoheme IX farnesyltransferase subfamily.

The protein resides in the cell inner membrane. The enzyme catalyses heme b + (2E,6E)-farnesyl diphosphate + H2O = Fe(II)-heme o + diphosphate. The protein operates within porphyrin-containing compound metabolism; heme O biosynthesis; heme O from protoheme: step 1/1. In terms of biological role, converts heme B (protoheme IX) to heme O by substitution of the vinyl group on carbon 2 of heme B porphyrin ring with a hydroxyethyl farnesyl side group. The protein is Protoheme IX farnesyltransferase of Psychromonas ingrahamii (strain DSM 17664 / CCUG 51855 / 37).